The following is a 115-amino-acid chain: NADH-ubiquinone oxidoreductase chain 3 (115 aa).

Transmembrane regions (helical) follow at residues 4–24 (IMVI…AFWL), 55–75 (FFLV…LLPI), and 86–106 (TMML…AYEW).

Belongs to the complex I subunit 3 family. Core subunit of respiratory chain NADH dehydrogenase (Complex I) which is composed of 45 different subunits. Interacts with TMEM186. Interacts with TMEM242.

The protein resides in the mitochondrion inner membrane. The enzyme catalyses a ubiquinone + NADH + 5 H(+)(in) = a ubiquinol + NAD(+) + 4 H(+)(out). Functionally, core subunit of the mitochondrial membrane respiratory chain NADH dehydrogenase (Complex I) which catalyzes electron transfer from NADH through the respiratory chain, using ubiquinone as an electron acceptor. Essential for the catalytic activity of complex I. The chain is NADH-ubiquinone oxidoreductase chain 3 from Baiomys taylori (Northern pygmy mouse).